Here is an 852-residue protein sequence, read N- to C-terminus: Nucleolar protein 14 homolog (852 aa).

The tract at residues M1 to D40 is disordered. Residues R20 to R35 are compositionally biased toward polar residues. The stretch at I190–N221 forms a coiled coil. 2 disordered regions span residues R288–D324 and L338–D410. A compositionally biased stretch (basic and acidic residues) spans G344–D353. Residues E354–N381 show a composition bias toward acidic residues. Positions K774–K851 form a coiled coil.

The protein belongs to the NOP14 family. Component of the ribosomal small subunit (SSU) processome.

It is found in the nucleus. The protein localises to the nucleolus. Its function is as follows. Involved in nucleolar processing of pre-18S ribosomal RNA. Has a role in the nuclear export of 40S pre-ribosomal subunit to the cytoplasm. The chain is Nucleolar protein 14 homolog (l(3)07882) from Drosophila melanogaster (Fruit fly).